Consider the following 487-residue polypeptide: Sugar transporter ERD6-like 6 (487 aa).

Ser2 is modified (N-acetylserine). 12 consecutive transmembrane segments (helical) span residues 46–66 (ISVL…GFTC), 89–109 (VFGS…GQIA), 115–135 (KGSL…ISFA), 146–166 (LLEG…IAEI), 178–198 (VNQL…LFVP), 201–221 (ILAV…FFIP), 284–304 (LMVG…GVLF), 320–340 (AATF…TWLV), 347–367 (LLLT…AAAF), 389–409 (VGVV…PWLI), 425–445 (IATL…NLLL), and 451–471 (GTFT…TLWV).

The protein belongs to the major facilitator superfamily. Sugar transporter (TC 2.A.1.1) family.

It is found in the membrane. In terms of biological role, sugar transporter. The chain is Sugar transporter ERD6-like 6 from Arabidopsis thaliana (Mouse-ear cress).